The chain runs to 357 residues: Arginine kinase Cal b 2.0101 (357 aa).

In terms of domain architecture, Phosphagen kinase N-terminal spans 9–91; sequence KLEEGFKKLE…FDPIIEDYHK (83 aa). Residue 64 to 68 participates in L-arginine binding; it reads GVGVY. Residues 119-356 enclose the Phosphagen kinase C-terminal domain; that stretch reads FVISTRVRCG…LELIKIEKEM (238 aa). ATP is bound by residues 122–126 and His185; that span reads STRVR. A disulfide bridge links Cys201 with Cys271. Residue Glu225 participates in L-arginine binding. Arg229 contacts ATP. Residue Cys271 participates in L-arginine binding. Residues 280 to 284 and 309 to 314 contribute to the ATP site; these read RASVH and RGTRGE. L-arginine is bound at residue Glu314.

This sequence belongs to the ATP:guanido phosphotransferase family. Expressed in chela muscle (at protein level). Expressed in muscle.

The catalysed reaction is L-arginine + ATP = N(omega)-phospho-L-arginine + ADP + H(+). In terms of biological role, catalyzes the reversible transfer of high energy ATP gamma-phosphate group to L-arginine. This is Arginine kinase Cal b 2.0101 from Callinectes bellicosus (Warrior swimming crab).